The primary structure comprises 438 residues: ATP-dependent protease ATPase subunit HslU (438 aa).

ATP-binding positions include Val18, 60–65 (GVGKTE), Asp252, Glu317, and Arg389.

This sequence belongs to the ClpX chaperone family. HslU subfamily. As to quaternary structure, a double ring-shaped homohexamer of HslV is capped on each side by a ring-shaped HslU homohexamer. The assembly of the HslU/HslV complex is dependent on binding of ATP.

Its subcellular location is the cytoplasm. ATPase subunit of a proteasome-like degradation complex; this subunit has chaperone activity. The binding of ATP and its subsequent hydrolysis by HslU are essential for unfolding of protein substrates subsequently hydrolyzed by HslV. HslU recognizes the N-terminal part of its protein substrates and unfolds these before they are guided to HslV for hydrolysis. This Saccharophagus degradans (strain 2-40 / ATCC 43961 / DSM 17024) protein is ATP-dependent protease ATPase subunit HslU.